Reading from the N-terminus, the 216-residue chain is Peptide methionine sulfoxide reductase MsrA (216 aa).

Residue cysteine 54 is part of the active site.

It belongs to the MsrA Met sulfoxide reductase family.

It carries out the reaction L-methionyl-[protein] + [thioredoxin]-disulfide + H2O = L-methionyl-(S)-S-oxide-[protein] + [thioredoxin]-dithiol. The enzyme catalyses [thioredoxin]-disulfide + L-methionine + H2O = L-methionine (S)-S-oxide + [thioredoxin]-dithiol. In terms of biological role, has an important function as a repair enzyme for proteins that have been inactivated by oxidation. Catalyzes the reversible oxidation-reduction of methionine sulfoxide in proteins to methionine. The protein is Peptide methionine sulfoxide reductase MsrA of Xanthomonas oryzae pv. oryzae (strain PXO99A).